The sequence spans 403 residues: Semaphorin-like protein A39 (403 aa).

A signal peptide spans 1–14 (MIPLLFILFYFANG). Positions 15 to 403 (IEWHKFETSE…MPQMKKILKM (389 aa)) constitute a Sema domain.

The protein belongs to the semaphorin family. In terms of assembly, interacts with host VESPR.

Its subcellular location is the secreted. In terms of biological role, acts as a semaphorin-like protein and binds to host plexin C1 receptor. May alter the movement of host plexin C1-expressing cells including dendritic cells, monocytes, or granulocytes in the proximity of infected cells. May also regulate host cell cytoskeleton of neighboring cells to improve viral infection. This is Semaphorin-like protein A39 from Homo sapiens (Human).